Consider the following 206-residue polypeptide: Transmembrane emp24 domain-containing protein bai (206 aa).

Positions 1–17 (MAKATFFYFLFIGYVWP) are cleaved as a signal peptide. The Lumenal segment spans residues 18 to 172 (IDSVMFNLAP…RDTNEKTNSR (155 aa)). Positions 30 to 140 (QKCLKEDIQA…LKPLEVDLKR (111 aa)) constitute a GOLD domain. Residues 173–193 (VLFFSIFSMCCLLGLATWQVL) traverse the membrane as a helical segment. Residues 194–206 (YLRRYFKAKKLIE) are Cytoplasmic-facing.

It belongs to the EMP24/GP25L family.

Its subcellular location is the membrane. Functionally, eca and bai are essential, though not redundant, for dorsoventral patterning of the embryo. Specifically required during early embryogenesis for the activity of maternal tkv, while the zygotic tkv is not affected. This chain is Transmembrane emp24 domain-containing protein bai, found in Drosophila persimilis (Fruit fly).